The primary structure comprises 95 residues: UPF0235 protein Pcar_0617 (95 aa).

Belongs to the UPF0235 family.

The protein is UPF0235 protein Pcar_0617 of Syntrophotalea carbinolica (strain DSM 2380 / NBRC 103641 / GraBd1) (Pelobacter carbinolicus).